The primary structure comprises 466 residues: mRNA-capping enzyme subunit alpha (466 aa).

K67 (N6-GMP-lysine intermediate) is an active-site residue. The interval 408-466 (REQGLKNAQKQFNHQASARSSLSQQHSTEPEQSQDQPKYVDDDDDNWSDDEPDTKRQKI) is disordered. A compositionally biased stretch (polar residues) spans 413-443 (KNAQKQFNHQASARSSLSQQHSTEPEQSQDQ). Residues 448-459 (DDDDDNWSDDEP) are compositionally biased toward acidic residues.

It belongs to the eukaryotic GTase family. In terms of assembly, heterodimer. The mRNA-capping enzyme is composed of two separate chains alpha and beta, respectively a mRNA guanylyltransferase and an mRNA 5'-triphosphate monophosphatase.

Its subcellular location is the nucleus. It carries out the reaction a 5'-end diphospho-ribonucleoside in mRNA + GTP + H(+) = a 5'-end (5'-triphosphoguanosine)-ribonucleoside in mRNA + diphosphate. In terms of biological role, second step of mRNA capping. Transfer of the GMP moiety of GTP to the 5'-end of RNA via an enzyme-GMP covalent reaction intermediate. This chain is mRNA-capping enzyme subunit alpha (CEG1), found in Kluyveromyces lactis (strain ATCC 8585 / CBS 2359 / DSM 70799 / NBRC 1267 / NRRL Y-1140 / WM37) (Yeast).